A 562-amino-acid polypeptide reads, in one-letter code: Serine palmitoyltransferase 2 (562 aa).

Residues 61–81 (LITYLNYLILIILGHIHDFLG) form a helical membrane-spanning segment. Position 365 is an N6-(pyridoxal phosphate)lysine (Lys-365).

This sequence belongs to the class-II pyridoxal-phosphate-dependent aminotransferase family. The cofactor is pyridoxal 5'-phosphate.

It localises to the membrane. The catalysed reaction is L-serine + hexadecanoyl-CoA + H(+) = 3-oxosphinganine + CO2 + CoA. It functions in the pathway lipid metabolism; sphingolipid metabolism. The chain is Serine palmitoyltransferase 2 (LCB2) from Kluyveromyces lactis (strain ATCC 8585 / CBS 2359 / DSM 70799 / NBRC 1267 / NRRL Y-1140 / WM37) (Yeast).